The following is a 67-amino-acid chain: Prokaryotic ubiquitin-like protein Pup (67 aa).

Low complexity predominate over residues 1–36 (MPQQFEQPQAQQAVTQEDDALATTQAATQTESTDQA). Positions 1–38 (MPQQFEQPQAQQAVTQEDDALATTQAATQTESTDQADV) are disordered. An ARC ATPase binding region spans residues 23 to 61 (TTQAATQTESTDQADVLDDILDDIESTLETNAEEYVNSF). Glu67 participates in a covalent cross-link: Isoglutamyl lysine isopeptide (Glu-Lys) (interchain with K-? in acceptor proteins).

The protein belongs to the prokaryotic ubiquitin-like protein family. Strongly interacts with the proteasome-associated ATPase ARC through a hydrophobic interface; the interacting region of Pup lies in its C-terminal half. There is one Pup binding site per ARC hexamer ring.

Its pathway is protein degradation; proteasomal Pup-dependent pathway. Protein modifier that is covalently attached to lysine residues of substrate proteins, thereby targeting them for proteasomal degradation. The tagging system is termed pupylation. This is Prokaryotic ubiquitin-like protein Pup from Bifidobacterium longum subsp. infantis (strain ATCC 15697 / DSM 20088 / JCM 1222 / NCTC 11817 / S12).